Here is a 381-residue protein sequence, read N- to C-terminus: Transaldolase 2 (381 aa).

The Schiff-base intermediate with substrate role is filled by K141.

This sequence belongs to the transaldolase family. Type 2 subfamily.

It is found in the cytoplasm. The catalysed reaction is D-sedoheptulose 7-phosphate + D-glyceraldehyde 3-phosphate = D-erythrose 4-phosphate + beta-D-fructose 6-phosphate. The protein operates within carbohydrate degradation; pentose phosphate pathway; D-glyceraldehyde 3-phosphate and beta-D-fructose 6-phosphate from D-ribose 5-phosphate and D-xylulose 5-phosphate (non-oxidative stage): step 2/3. In terms of biological role, transaldolase is important for the balance of metabolites in the pentose-phosphate pathway. In Nostoc punctiforme (strain ATCC 29133 / PCC 73102), this protein is Transaldolase 2 (tal2).